A 453-amino-acid polypeptide reads, in one-letter code: Pup--protein ligase (453 aa).

E9 provides a ligand contact to Mg(2+). R53 contributes to the ATP binding site. A Mg(2+)-binding site is contributed by Y55. Residue D57 is the Proton acceptor of the active site. E63 provides a ligand contact to Mg(2+). Residues T66 and W420 each coordinate ATP.

Belongs to the Pup ligase/Pup deamidase family. Pup-conjugating enzyme subfamily.

It catalyses the reaction ATP + [prokaryotic ubiquitin-like protein]-L-glutamate + [protein]-L-lysine = ADP + phosphate + N(6)-([prokaryotic ubiquitin-like protein]-gamma-L-glutamyl)-[protein]-L-lysine.. Its pathway is protein degradation; proteasomal Pup-dependent pathway. It participates in protein modification; protein pupylation. Functionally, catalyzes the covalent attachment of the prokaryotic ubiquitin-like protein modifier Pup to the proteasomal substrate proteins, thereby targeting them for proteasomal degradation. This tagging system is termed pupylation. The ligation reaction involves the side-chain carboxylate of the C-terminal glutamate of Pup and the side-chain amino group of a substrate lysine. This is Pup--protein ligase from Nocardioides sp. (strain ATCC BAA-499 / JS614).